Reading from the N-terminus, the 463-residue chain is Phosphomannomutase (463 aa).

Ser-103 acts as the Phosphoserine intermediate in catalysis. Ser-103, Asp-248, Asp-250, and Asp-252 together coordinate Mg(2+).

The protein belongs to the phosphohexose mutase family. It depends on Mg(2+) as a cofactor.

The protein resides in the cell membrane. The enzyme catalyses alpha-D-mannose 1-phosphate = D-mannose 6-phosphate. It participates in nucleotide-sugar biosynthesis; GDP-alpha-D-mannose biosynthesis; alpha-D-mannose 1-phosphate from D-fructose 6-phosphate: step 2/2. It functions in the pathway bacterial outer membrane biogenesis; LPS O-antigen biosynthesis. Involved in GDP-mannose biosynthesis which serves as the activated sugar nucleotide precursor for mannose residues in cell surface polysaccharides. In Vibrio cholerae serotype O1 (strain ATCC 39315 / El Tor Inaba N16961), this protein is Phosphomannomutase (rfbB).